We begin with the raw amino-acid sequence, 780 residues long: Molybdenum cofactor sulfurase (780 aa).

Lys-246 bears the N6-(pyridoxal phosphate)lysine mark. Residue Cys-413 is part of the active site. One can recognise an MOSC domain in the interval 635–780; that stretch reads LRLLRQSGQR…MTCGDVVLVE (146 aa). Ser-734 carries the post-translational modification Phosphoserine.

Belongs to the class-V pyridoxal-phosphate-dependent aminotransferase family. MOCOS subfamily. Requires pyridoxal 5'-phosphate as cofactor.

It carries out the reaction Mo-molybdopterin + L-cysteine + AH2 = thio-Mo-molybdopterin + L-alanine + A + H2O. Its function is as follows. Sulfurates the molybdenum cofactor. Sulfation of molybdenum is essential for xanthine dehydrogenase (XDH) and aldehyde oxidase (ADO) enzymes in which molybdenum cofactor is liganded by 1 oxygen and 1 sulfur atom in active form. The polypeptide is Molybdenum cofactor sulfurase (Drosophila yakuba (Fruit fly)).